The sequence spans 183 residues: MTGRGTSSRFLTSVLHNGLGRYVQQLQRLSLSLSRDAPSSRGAREFVEREVTDFARRNPGVVVYVNPRPCAMPRIVAEYLNGAVREENVNSKSVEEIKSLVQKLADQSGLDVIRIRKPFHTDNPSIQGQWTPSPTNGLPSTGCGPENSGILLQLRCKHSKEPGALDRERDRIGSSFGFQAQAE.

Disordered stretches follow at residues 120-144 (HTDN…TGCG) and 162-183 (PGAL…AQAE). Over residues 122 to 139 (DNPSIQGQWTPSPTNGLP) the composition is skewed to polar residues. A compositionally biased stretch (basic and acidic residues) spans 162–172 (PGALDRERDRI).

The protein belongs to the mitochondrion-specific ribosomal protein mL43 family. Component of the mitochondrial ribosome large subunit (39S) which comprises a 16S rRNA and about 50 distinct proteins. In terms of tissue distribution, ubiquitous with the highest levels in the liver, heart and kidneys. The skeletal muscle, brain and testis showed lower but detectable expression. Expression is coregulated with TWNK.

Its subcellular location is the mitochondrion. In Mus musculus (Mouse), this protein is Large ribosomal subunit protein mL43 (Mrpl43).